The following is a 279-amino-acid chain: MRKTVVDIIAMKAAGQKISMLTAYDASMSALLDQAGIDILLVGDSLGMTVLGYDSTVPVTMADMVHHMAAVRRGAPDAFVVGDMPFGSYQTGARDAVLNAMRLLKEGGCDVVKLEGGEVVCPVVKAIVDAGIPVMGHLGLTPQTAAVLGGYKVQGRDMEAARKLFADAKRLEEAGVCGLVLECIPAGLAEVVTASIAVPTVGIGAGKGCDGQVLVINDMLGLFEKFTPKFVKHYAQLAPLVRQGVENYIGEVRAGAFPEAEHTFTSSCDYKVLLSGDDQ.

D44 and D83 together coordinate Mg(2+). 3-methyl-2-oxobutanoate is bound by residues 44-45 (DS), D83, and K113. Mg(2+) is bound at residue E115. The active-site Proton acceptor is E182.

It belongs to the PanB family. Homodecamer; pentamer of dimers. Requires Mg(2+) as cofactor.

It localises to the cytoplasm. It catalyses the reaction 3-methyl-2-oxobutanoate + (6R)-5,10-methylene-5,6,7,8-tetrahydrofolate + H2O = 2-dehydropantoate + (6S)-5,6,7,8-tetrahydrofolate. It functions in the pathway cofactor biosynthesis; (R)-pantothenate biosynthesis; (R)-pantoate from 3-methyl-2-oxobutanoate: step 1/2. Catalyzes the reversible reaction in which hydroxymethyl group from 5,10-methylenetetrahydrofolate is transferred onto alpha-ketoisovalerate to form ketopantoate. The sequence is that of 3-methyl-2-oxobutanoate hydroxymethyltransferase from Desulfotalea psychrophila (strain LSv54 / DSM 12343).